We begin with the raw amino-acid sequence, 529 residues long: MLMLLVRGTHFENNWSKLIPPAPLDATVSEPPVPDSGEPDSGVPWRRSDEALRVNVGGVRRRLSARALARFPGTRLGRLQAAKSEEQARRLCDDYDAAAREFYFDRHPGFFLSLLHFYRTGRLHVLDELCVFAFGQEADYWGLGENALAACCRARYLERRVARPRAWDEDSDTPSSVDPNPDEISDVQRELARYGAARCGRLRRRLWLTMENPGYSLPSKLFSCVSIGVVLASIAAMCIHSLPEYQAREAAAAVATVAAGRSAEDVRDDPVLRRLEYFCIAWFSFEVSSRLLLAPSTRNFFCHPLNLIDIVSVLPFYLTLLASVALGGNNHGGTSGEELGHLGKVVQVFRLMRIFRVLKLARHSTGLRSLGATLKHSYREVGILLLYLAVGVSVFSGVAYTAEKEEDVGFDTIPACWWWGTVSMTTVGYGDVVPVTLAGKLAASGCILGGILVVALPITIIFNKFSHFYQRQKALEAAVRNSGHREFEDLLSSVDGVSDASLETSRETSQEGRSADLEAPSESPKPQIY.

The Cytoplasmic portion of the chain corresponds to 1–217 (MLMLLVRGTH…LTMENPGYSL (217 aa)). The helical transmembrane segment at 218–239 (PSKLFSCVSIGVVLASIAAMCI) threads the bilayer. At 240 to 270 (HSLPEYQAREAAAAVATVAAGRSAEDVRDDP) the chain is on the extracellular side. The chain crosses the membrane as a helical span at residues 271 to 293 (VLRRLEYFCIAWFSFEVSSRLLL). Topologically, residues 294 to 304 (APSTRNFFCHP) are cytoplasmic. Residues 305 to 322 (LNLIDIVSVLPFYLTLLA) form a helical membrane-spanning segment. The Extracellular portion of the chain corresponds to 323-342 (SVALGGNNHGGTSGEELGHL). Residues 343–363 (GKVVQVFRLMRIFRVLKLARH) traverse the membrane as a helical; Voltage-sensor segment. Residues 364-378 (STGLRSLGATLKHSY) are Cytoplasmic-facing. Residues 379–400 (REVGILLLYLAVGVSVFSGVAY) form a helical membrane-spanning segment. Over 401 to 413 (TAEKEEDVGFDTI) the chain is Extracellular. The helical intramembrane region spans 414–425 (PACWWWGTVSMT). Positions 426–431 (TVGYGD) match the Selectivity filter motif. An intramembrane segment occupies 426–433 (TVGYGDVV). Over 434-440 (PVTLAGK) the chain is Extracellular. The helical transmembrane segment at 441–469 (LAASGCILGGILVVALPITIIFNKFSHFY) threads the bilayer. The Cytoplasmic segment spans residues 470–529 (QRQKALEAAVRNSGHREFEDLLSSVDGVSDASLETSRETSQEGRSADLEAPSESPKPQIY). The tract at residues 498-529 (SDASLETSRETSQEGRSADLEAPSESPKPQIY) is disordered. The segment covering 504–516 (TSRETSQEGRSAD) has biased composition (basic and acidic residues).

This sequence belongs to the potassium channel family. S (TC 1.A.1.2) subfamily. Kv9.1/KCNS1 sub-subfamily. In terms of assembly, heterotetramer with KCNB1. Heterotetramer with KCNB2. Does not form homomultimers.

It is found in the cell membrane. In terms of biological role, potassium channel regulatory subunit that modulate the delayed rectifier voltage-gated potassium channel activity of KCNB1 and KCNB2 by altering their kinetics, expression levels, and shifting the half-inactivation potential to more polarized values. While it does not form functional channels on its own, it can form functional heterotetrameric channels with KCNB1 and KCNB2. Each regulatory subunit has unique regulatory properties that can lead to extensive inhibition, significant changes in kinetics, and/or substantial shifts in the voltage dependencies of the inactivation process. The protein is Delayed-rectifier potassium channel regulatory subunit KCNS1 of Lemur catta (Ring-tailed lemur).